Reading from the N-terminus, the 326-residue chain is ATP synthase gamma chain (326 aa).

The protein belongs to the ATPase gamma chain family. In terms of assembly, F-type ATPases have 2 components, CF(1) - the catalytic core - and CF(0) - the membrane proton channel. CF(1) has five subunits: alpha(3), beta(3), gamma(1), delta(1), epsilon(1). CF(0) has three main subunits: a, b and c.

It localises to the cell membrane. Functionally, produces ATP from ADP in the presence of a proton gradient across the membrane. The gamma chain is believed to be important in regulating ATPase activity and the flow of protons through the CF(0) complex. The polypeptide is ATP synthase gamma chain (Rhodococcus opacus (strain B4)).